The chain runs to 227 residues: 2,3-bisphosphoglycerate-dependent phosphoglycerate mutase (227 aa).

Residues 7-14 (RHGQSEWN), 20-21 (TG), arginine 59, 86-89 (ERHY), lysine 97, 113-114 (RR), and 182-183 (GN) contribute to the substrate site. Histidine 8 acts as the Tele-phosphohistidine intermediate in catalysis. Glutamate 86 functions as the Proton donor/acceptor in the catalytic mechanism.

This sequence belongs to the phosphoglycerate mutase family. BPG-dependent PGAM subfamily. As to quaternary structure, homodimer.

It carries out the reaction (2R)-2-phosphoglycerate = (2R)-3-phosphoglycerate. The protein operates within carbohydrate degradation; glycolysis; pyruvate from D-glyceraldehyde 3-phosphate: step 3/5. Functionally, catalyzes the interconversion of 2-phosphoglycerate and 3-phosphoglycerate. The protein is 2,3-bisphosphoglycerate-dependent phosphoglycerate mutase of Neisseria gonorrhoeae (strain ATCC 700825 / FA 1090).